Reading from the N-terminus, the 253-residue chain is ER membrane protein complex subunit 3 (253 aa).

Helical transmembrane passes span 10–30, 126–146, and 176–196; these read WVLL…QYIM, FIPQ…FILM, and SISW…LIGL.

This sequence belongs to the EMC3 family. As to quaternary structure, component of the ER membrane protein complex (EMC), which is composed of EMC1, EMC2, EMC3, EMC4, EMC5 and EMC6.

The protein resides in the endoplasmic reticulum membrane. The EMC seems to be required for efficient folding of proteins in the endoplasmic reticulum (ER). This Saccharomyces cerevisiae (strain YJM789) (Baker's yeast) protein is ER membrane protein complex subunit 3 (AIM27).